The chain runs to 180 residues: CASP-like protein 2A3 (180 aa).

The Cytoplasmic segment spans residues 1 to 13 (MELIYGSTMRKKW). A helical transmembrane segment spans residues 14–34 (IEPALRFLPVGLCISALALML). Residues 35-55 (KSKEGNENGILEYKHVGAFRY) are Extracellular-facing. A helical membrane pass occupies residues 56-76 (LAYANGICAAYSVLSTFNSVV). The Cytoplasmic portion of the chain corresponds to 77–85 (PRSCSLSRA). Residues 86-106 (WFVFVFDQAFTYLMLGAGAVV) traverse the membrane as a helical segment. Over 107–135 (TEVLYLAYKGDEKITWFEICPYYGRFCNR) the chain is Extracellular. Residues 136–156 (VAASLVISFLALLCFIPLSLI) form a helical membrane-spanning segment. Residues 157 to 180 (SAYRVFSKYDPPSLCKKDQITSQS) are Cytoplasmic-facing.

The protein belongs to the Casparian strip membrane proteins (CASP) family. In terms of assembly, homodimer and heterodimers.

It localises to the cell membrane. In Picea sitchensis (Sitka spruce), this protein is CASP-like protein 2A3.